A 102-amino-acid polypeptide reads, in one-letter code: Large ribosomal subunit protein bL21 (102 aa).

The protein belongs to the bacterial ribosomal protein bL21 family. Part of the 50S ribosomal subunit. Contacts protein L20.

Functionally, this protein binds to 23S rRNA in the presence of protein L20. The sequence is that of Large ribosomal subunit protein bL21 from Exiguobacterium sibiricum (strain DSM 17290 / CCUG 55495 / CIP 109462 / JCM 13490 / 255-15).